The following is a 387-amino-acid chain: F-box/LRR-repeat/kelch-repeat protein At2g29770 (387 aa).

The interval 1-34 (MVFISETSDDGSNGGDPTKNPQEEEEENLPPIPQ) is disordered. Residues 31–78 (PIPQGIPDELIESTVLLIRRCHYPTLSLLSKTFRRVISSSELYKSRFI) enclose the F-box domain. Residues 105-128 (CNIPRNISLHLREIKSLPPLNHGS) form an LRR 1 repeat. 2 Kelch repeats span residues 136–183 (HMYV…VIDG) and 184–231 (RIYV…FVTS). An LRR 2 repeat occupies 196–219 (DHWIEVFDIENRIWSSVPHHRYCN).

The protein is F-box/LRR-repeat/kelch-repeat protein At2g29770 of Arabidopsis thaliana (Mouse-ear cress).